The primary structure comprises 109 residues: Putative transporter-like protein YIL171W (109 aa).

Polar residues predominate over residues 1-22 (MSGVNNTSANDLSTTESNSNSA). The tract at residues 1-40 (MSGVNNTSANDLSTTESNSNSAVGAPSVKTEHGDSKDSLN) is disordered. Over 1-56 (MSGVNNTSANDLSTTESNSNSAVGAPSVKTEHGDSKDSLNLDATEAPIDLPQKPLS) the chain is Cytoplasmic. Basic and acidic residues predominate over residues 29 to 39 (KTEHGDSKDSL). Residues 57 to 77 (AYTTVAILCLMIAFGGFIFGW) traverse the membrane as a helical segment. At 78–109 (DTGTISGFVNLSDFIRRFGQKKTTRGLTTYRK) the chain is on the extracellular side. N-linked (GlcNAc...) asparagine glycosylation occurs at N87.

Belongs to the major facilitator superfamily. Sugar transporter (TC 2.A.1.1) family.

Its subcellular location is the cell membrane. Functionally, probable glucose transporter. This chain is Putative transporter-like protein YIL171W, found in Saccharomyces cerevisiae (strain ATCC 204508 / S288c) (Baker's yeast).